Reading from the N-terminus, the 382-residue chain is B3 domain-containing protein Os03g0622100 (382 aa).

The segment at residues 29–123 (CKHFLTYMVG…SFDVLIFDPS (95 aa)) is a DNA-binding region (TF-B3 1). 2 stretches are compositionally biased toward basic and acidic residues: residues 136–158 (RGFGREEKSAGAEGGGRDGDKNG) and 193–202 (QDHREEKKEG). Residues 136-222 (RGFGREEKSA…EDVDKDGEDR (87 aa)) form a disordered region. Over residues 203–218 (DDEDEDEDEDEDVDKD) the composition is skewed to acidic residues. The TF-B3 2 DNA-binding region spans 261–363 (KVIHASHLLS…AGDRLRRRPR (103 aa)).

The protein localises to the nucleus. The chain is B3 domain-containing protein Os03g0622100 from Oryza sativa subsp. japonica (Rice).